A 483-amino-acid polypeptide reads, in one-letter code: Cobyric acid synthase (483 aa).

The GATase cobBQ-type domain maps to 251 to 438 (ALIVAVPMLP…LHGVFSADRF (188 aa)). The active-site Nucleophile is the Cys-333. The active site involves His-430.

Belongs to the CobB/CobQ family. CobQ subfamily.

It functions in the pathway cofactor biosynthesis; adenosylcobalamin biosynthesis. Catalyzes amidations at positions B, D, E, and G on adenosylcobyrinic A,C-diamide. NH(2) groups are provided by glutamine, and one molecule of ATP is hydrogenolyzed for each amidation. This is Cobyric acid synthase from Brucella suis (strain ATCC 23445 / NCTC 10510).